We begin with the raw amino-acid sequence, 138 residues long: Large ribosomal subunit protein bL17 (138 aa).

Belongs to the bacterial ribosomal protein bL17 family. Part of the 50S ribosomal subunit. Contacts protein L32.

The polypeptide is Large ribosomal subunit protein bL17 (Methylorubrum extorquens (strain CM4 / NCIMB 13688) (Methylobacterium extorquens)).